We begin with the raw amino-acid sequence, 324 residues long: MSSDNSKQDKQIEKTAAQKISKFGSFVAGGLAACIAVTVTNPIELIKIRMQLQGEMSASAAKVYKNPIQGMAVIFKNEGIKGLQKGLNAAYIYQIGLNGSRLGFYEPIRSSLNQLFFPDQEPHKVQSVGVNVFSGAASGIIGAVIGSPLFLVKTRLQSYSEFIKIGEQTHYTGVWNGLVTIFKTEGVKGLFRGIDAAILRTGAGSSVQLPIYNTAKNILVKNDLMKDGPALHLTASTISGLGVAVVMNPWDVILTRIYNQKGDLYKGPIDCLVKTVRIEGVTALYKGFAAQVFRIAPHTIMCLTFMEQTMKLVYSIESRVLGHN.

Solcar repeat units follow at residues 20–111 (ISKF…IRSS), 126–218 (QSVG…AKNI), and 227–312 (DGPA…TMKL). Helical transmembrane passes span 26–46 (FVAG…IELI), 79–99 (GIKG…GLNG), 132–152 (VFSG…LFLV), 193–213 (GIDA…PIYN), 233–253 (LTAS…WDVI), and 284–305 (LYKG…CLTF).

This sequence belongs to the mitochondrial carrier (TC 2.A.29) family.

The protein localises to the mitochondrion inner membrane. The enzyme catalyses a dicarboxylate(in) + sulfate(out) = a dicarboxylate(out) + sulfate(in). It carries out the reaction (2S)-2-isopropylmalate(in) + sulfate(out) = (2S)-2-isopropylmalate(out) + sulfate(in). It catalyses the reaction (2R,3S)-3-isopropylmalate(in) + sulfate(out) = (2R,3S)-3-isopropylmalate(out) + sulfate(in). The catalysed reaction is malonate(in) + sulfate(out) = malonate(out) + sulfate(in). The enzyme catalyses oxaloacetate(in) + sulfate(out) = oxaloacetate(out) + sulfate(in). It carries out the reaction thiosulfate(in) + sulfate(out) = thiosulfate(out) + sulfate(in). With respect to regulation, inhibited by alpha-keto isocaproate, an intermediate of leucine biosynthesis pathway. In terms of biological role, antiporter that exchanges dicarboxylates and sulfur oxoanions across the inner membrane of mitochondria. Exports alpha-isopropylmalate from mitochondrial matrix to the cytosol, where it serves as a precursor for leucine biosynthesis. This Saccharomyces cerevisiae (strain ATCC 204508 / S288c) (Baker's yeast) protein is Mitochondrial oxaloacetate transport protein (OAC1).